We begin with the raw amino-acid sequence, 562 residues long: NAD-dependent malic enzyme 1 (562 aa).

Residue Tyr-101 is the Proton donor of the active site. Arg-154 is an NAD(+) binding site. Residue Lys-172 is the Proton acceptor of the active site. A divalent metal cation is bound by residues Glu-243, Asp-244, and Asp-267. Residues Asp-267 and Asn-415 each contribute to the NAD(+) site.

The protein belongs to the malic enzymes family. In terms of assembly, homotetramer. Requires Mg(2+) as cofactor. The cofactor is Mn(2+).

The catalysed reaction is (S)-malate + NAD(+) = pyruvate + CO2 + NADH. It catalyses the reaction oxaloacetate + H(+) = pyruvate + CO2. This chain is NAD-dependent malic enzyme 1, found in Vibrio vulnificus (strain YJ016).